Consider the following 204-residue polypeptide: AFG2-interacting ribosome maturation factor (204 aa).

Part of the 55LCC heterohexameric ATPase complex. Does not associate with pre-60S ribosomal particles.

Its subcellular location is the nucleus. The protein localises to the cytoplasm. Part of the 55LCC heterohexameric ATPase complex which is chromatin-associated and promotes replisome proteostasis to maintain replication fork progression and genome stability. Required for replication fork progression, sister chromatid cohesion, and chromosome stability. The ATPase activity is specifically enhanced by replication fork DNA and is coupled to cysteine protease-dependent cleavage of replisome substrates in response to replication fork damage. Uses ATPase activity to process replisome substrates in S-phase, facilitating their proteolytic turnover from chromatin to ensure DNA replication and mitotic fidelity. Involved in the cytoplasmic maturation steps of pre-60S ribosomal particles by promoting the release of shuttling protein RSL24D1/RLP24 from the pre-ribosomal particles. The polypeptide is AFG2-interacting ribosome maturation factor (airim) (Xenopus tropicalis (Western clawed frog)).